Reading from the N-terminus, the 440-residue chain is Thymidine phosphorylase (440 aa).

Belongs to the thymidine/pyrimidine-nucleoside phosphorylase family. Homodimer.

It catalyses the reaction thymidine + phosphate = 2-deoxy-alpha-D-ribose 1-phosphate + thymine. The protein operates within pyrimidine metabolism; dTMP biosynthesis via salvage pathway; dTMP from thymine: step 1/2. Its function is as follows. The enzymes which catalyze the reversible phosphorolysis of pyrimidine nucleosides are involved in the degradation of these compounds and in their utilization as carbon and energy sources, or in the rescue of pyrimidine bases for nucleotide synthesis. The polypeptide is Thymidine phosphorylase (Shigella boydii serotype 4 (strain Sb227)).